Here is a 1504-residue protein sequence, read N- to C-terminus: NAC-alpha domain-containing protein 1 (1504 aa).

Disordered stretches follow at residues 127–150, 208–261, 315–356, 396–436, 460–525, 539–565, 701–812, 834–1064, 1099–1366, and 1430–1467; these read KPGA…ASAW, DREG…HGPH, PSDW…SSWS, LPQE…STSA, DTSA…TNSQ, GLES…TPTV, VLPP…EEGV, DLES…LPVA, PFQH…AMSK, and PSEP…GLEP. The segment covering 342-354 has biased composition (low complexity); sequence SSESSLSADSSSS. Positions 398 to 407 are enriched in acidic residues; sequence QEEEEDEEDV. 2 stretches are compositionally biased toward low complexity: residues 408–422 and 462–475; these read AATA…ATPD and SAAS…SYAG. Positions 510 to 525 are enriched in polar residues; the sequence is STPQTSEQEICLTNSQ. Positions 775 to 792 are enriched in polar residues; sequence PQESPTASSLTLQSSHPT. A compositionally biased stretch (low complexity) spans 930–939; sequence PPASNQAQQN. The segment covering 958–968 has biased composition (polar residues); that stretch reads STLSTKTSEPT. Residues 989-1005 are compositionally biased toward basic and acidic residues; the sequence is EAHDGVKTHSPQREALR. Phosphoserine is present on Ser-998. Over residues 1016–1031 the composition is skewed to polar residues; the sequence is SPGQGNGPKSATSQGA. The segment covering 1159–1171 has biased composition (pro residues); the sequence is PGPPDPCLCPPPQ. The segment covering 1213–1222 has biased composition (polar residues); the sequence is VSLSPHSTLN. Ser-1268 is subject to Phosphoserine. One can recognise an NAC-A/B domain in the interval 1354 to 1419; it reads SRSEKKARKA…AKIEDLSQQV (66 aa). Acidic residues predominate over residues 1451-1464; it reads EEQEEEDEEVEEAG.

It belongs to the NAC-alpha family.

The protein localises to the cytoplasm. It localises to the nucleus. Functionally, may prevent inappropriate targeting of non-secretory polypeptides to the endoplasmic reticulum (ER). May bind to nascent polypeptide chains as they emerge from the ribosome and block their interaction with the signal recognition particle (SRP), which normally targets nascent secretory peptides to the ER. May also reduce the inherent affinity of ribosomes for protein translocation sites in the ER membrane (M sites). This is NAC-alpha domain-containing protein 1 (Nacad) from Mus musculus (Mouse).